The sequence spans 239 residues: MNIGVIFAGGVGRRMNTKGKPKQFLEVHGKPIIVHTIDIFQNTEAIDAVVVVCVSDWLDYMNNLVERFNLTKVKAVVAGGETGQMSIFKGLEAAEQLATDDAVVLIHDGVRPLINEEVINANIKSVKETGSAVTSVRAKETVVLVNDSSKISEVVDRTRSFIAKAPQSFYLSDILSVERDAISKGITDAIDSSTLMGMYNRELTIVEGPYENIKITTPDDFYMFKALYDARENEQIYGM.

CTP contacts are provided by residues 7 to 10 (FAGG) and 80 to 86 (GETGQMS).

Belongs to the IspD/TarI cytidylyltransferase family. TarI subfamily.

The catalysed reaction is D-ribitol 5-phosphate + CTP + H(+) = CDP-L-ribitol + diphosphate. The protein operates within cell wall biogenesis; poly(ribitol phosphate) teichoic acid biosynthesis. Functionally, catalyzes the transfer of the cytidylyl group of CTP to D-ribitol 5-phosphate. The polypeptide is Ribitol-5-phosphate cytidylyltransferase (Streptococcus agalactiae serotype III (strain NEM316)).